The chain runs to 325 residues: Gibberellin 20-oxidase-like protein (325 aa).

The 115-residue stretch at 152 to 266 folds into the Fe2OG dioxygenase domain; sequence CHGYFRINNY…RFSLAFFWCF (115 aa). His186, Asp188, and His244 together coordinate Fe cation. Residue Arg257 coordinates 2-oxoglutarate.

It belongs to the iron/ascorbate-dependent oxidoreductase family. GA20OX subfamily. Fe(2+) serves as cofactor. Highly expressed in elongation zone of lateral roots.

In terms of biological role, negative regulator of root hair growth. The chain is Gibberellin 20-oxidase-like protein from Arabidopsis thaliana (Mouse-ear cress).